The primary structure comprises 230 residues: ATP-dependent dethiobiotin synthetase BioD (230 aa).

Position 12–17 (12–17 (DIGKTH)) interacts with ATP. Residue Thr-16 coordinates Mg(2+). Lys-37 is an active-site residue. Position 41 (Ser-41) interacts with substrate. Residues Asp-52, 115-118 (EGAG), and 175-176 (SE) contribute to the ATP site. 2 residues coordinate Mg(2+): Asp-52 and Glu-115.

Belongs to the dethiobiotin synthetase family. In terms of assembly, homodimer. Mg(2+) is required as a cofactor.

The protein resides in the cytoplasm. The enzyme catalyses (7R,8S)-7,8-diammoniononanoate + CO2 + ATP = (4R,5S)-dethiobiotin + ADP + phosphate + 3 H(+). Its pathway is cofactor biosynthesis; biotin biosynthesis; biotin from 7,8-diaminononanoate: step 1/2. Catalyzes a mechanistically unusual reaction, the ATP-dependent insertion of CO2 between the N7 and N8 nitrogen atoms of 7,8-diaminopelargonic acid (DAPA, also called 7,8-diammoniononanoate) to form a ureido ring. This is ATP-dependent dethiobiotin synthetase BioD from Caulobacter sp. (strain K31).